We begin with the raw amino-acid sequence, 363 residues long: Type-2 angiotensin II receptor (363 aa).

Residues 1-45 (MKDNFSFAATSRNITSSRPFDNLNATGTNESAFNCSHKPSDKHLE) lie on the Extracellular side of the membrane. N-linked (GlcNAc...) asparagine glycosylation is found at asparagine 4, asparagine 13, asparagine 24, asparagine 29, and asparagine 34. 2 cysteine pairs are disulfide-bonded: cysteine 35/cysteine 290 and cysteine 117/cysteine 195. A helical transmembrane segment spans residues 46–70 (AIPVLYYMIFVIGFAVNIVVVSLFC). Over 71–80 (CQKGPKKVSS) the chain is Cytoplasmic. Residues 81-104 (IYIFNLALADLLLLATLPLWATYY) traverse the membrane as a helical segment. 2 residues coordinate angiotensin II: tyrosine 103 and tyrosine 104. Over 105 to 114 (SYRYDWLFGP) the chain is Extracellular. A helical transmembrane segment spans residues 115-140 (VMCKVFGSFLTLNMFASIFFITCMSV). Residues 141–159 (DRYQSVIYPFLSQRRNPWQ) are Cytoplasmic-facing. The chain crosses the membrane as a helical span at residues 160 to 181 (ASYVVPLVWCMACLSSLPTFYF). 3 residues coordinate angiotensin II: arginine 182, tyrosine 204, and lysine 215. Topologically, residues 182–206 (RDVRTIEYLGVNACIMAFPPEKYAQ) are extracellular. A helical membrane pass occupies residues 207–232 (WSAGIALMKNILGFIIPLIFIATCYF). Residues 233–257 (GIRKHLLKTNSYGKNRITRDQVLKM) are Cytoplasmic-facing. Residues 258-281 (AAAVVLAFIICWLPFHVLTFLDAL) traverse the membrane as a helical segment. Aspartate 279 serves as a coordination point for angiotensin II. Residues 282 to 294 (TWMGIINSCEVIA) are Extracellular-facing. Residues 295 to 320 (VIDLALPFAILLGFTNSCVNPFLYCF) traverse the membrane as a helical segment. Aspartate 297 serves as a coordination point for angiotensin II. Topologically, residues 321–363 (VGNRFQQKLRSVFRVPITWLQGKRETMSCRKGSSLREMDTFVS) are cytoplasmic. The tract at residues 324 to 333 (RFQQKLRSVF) is helix VIII. A Phosphoserine; by PKC modification is found at serine 354.

Belongs to the G-protein coupled receptor 1 family. Interacts with MTUS1. Expressed at highest levels in adrenal gland and uterus.

It localises to the cell membrane. Functionally, receptor for angiotensin II, a vasoconstricting peptide. Signals primarily via a non-canonical G-protein- and beta-arrestin independent pathways. Cooperates with MTUS1 to inhibit ERK2 activation and cell proliferation. This is Type-2 angiotensin II receptor from Mus musculus (Mouse).